The primary structure comprises 275 residues: Methyltransferase str2 (275 aa).

The protein belongs to the methyltransferase superfamily. LaeA methyltransferase family.

It participates in mycotoxin biosynthesis. Functionally, methyltransferase; part of the gene cluster that mediates the biosynthesis of strobilurin A, an antifungal polyketide that contains a key beta-methoxyacrylate toxophore that targets the complex III of the mitochondrial electron transport chain. Strobilurin biosynthesis begins with construction of benzoyl CoA by step-wise elimination of ammonia from phenylalanine by the phenylalanine ammonia-lyase str11, oxygenation by str8 and retro-Claisen reaction to form benzoic acid, which is activated to its CoA thiolester benzoyl CoA by the dedicated CoA ligase str10. Benzoyl CoA forms the starter unit for the highly reducing polyketide synthase stpks1 that produces the polyketide prestrobilutin A. The FAD-dependent oxygenase str9 then catalyzes the key oxidative rearrangement responsible for the creation of the beta-methoxyacrylate toxophore. Str9 performs epoxidation of the 2,3 olefin of prestrobilutin A, followed by Meinwald rearrangement to furnish the aldehyde intermediate. Rapid enolization of the aldehyde intermediate would give the beta-methoxyacrylate skeleton and methylations catalyzed by str2 and str3 complete the synthesis and lead to the production of strobilurin A. The short-chain dehydrogenase stl2 and the dehydrogenase str4 play a role in the shunt pathway leading to the production of bolineol. The cluster encodes no obvious halogenase gene that could be involved in production of strobilurin B, nor any obvious dimethylallyl-transferase that could be involved in the production of strobilurin G. It is possible that unknown proteins encoded in, or near, the cluster (such as str1 or stl1) may form new classes of halogenases or dimethylally-transferases, or that the responsible genes are located elsewhere on the genome. Similarly, proteins encoded by str5/str6 hydrolases appear to have no chemical role in the biosynthesis of strobilurin A. Finally, no obvious self-resistance gene is found within the cluster. The sequence is that of Methyltransferase str2 from Strobilurus tenacellus.